Consider the following 140-residue polypeptide: Lymphocyte antigen 6 complex locus protein G5c (140 aa).

The signal sequence occupies residues 1–41 (MRFMAGPAGSQNPGPMCFHSSLQALYTVLLIVLVMMSLVFG). A UPAR/Ly6 domain is found at 60 to 140 (LRCYRCLLET…SQCCFLGFLQ (81 aa)). Intrachain disulfides connect cysteine 62/cysteine 89, cysteine 65/cysteine 74, cysteine 81/cysteine 107, and cysteine 116/cysteine 133. N-linked (GlcNAc...) asparagine glycosylation occurs at asparagine 96.

In terms of assembly, forms oligomers. In terms of processing, N-glycosylated.

The protein resides in the secreted. In terms of biological role, may have a role in hematopoietic cell differentiation. The sequence is that of Lymphocyte antigen 6 complex locus protein G5c (LY6G5C) from Macaca mulatta (Rhesus macaque).